A 135-amino-acid polypeptide reads, in one-letter code: Ribonuclease VapC9 (135 aa).

One can recognise a PINc domain in the interval 15 to 118 (VVDTNVLMYV…LKRKAKQRGI (104 aa)). 2 residues coordinate Mg(2+): aspartate 17 and aspartate 88.

The protein belongs to the PINc/VapC protein family. As to quaternary structure, dimer. The cofactor is Mg(2+).

Toxic component of a type II toxin-antitoxin (TA) system. An RNase. In Archaeoglobus fulgidus (strain ATCC 49558 / DSM 4304 / JCM 9628 / NBRC 100126 / VC-16), this protein is Ribonuclease VapC9.